The sequence spans 223 residues: Ubiquitin carboxyl-terminal hydrolase isozyme L1 (223 aa).

Residue M1 is modified to N-acetylmethionine. In terms of domain architecture, UCH catalytic spans 2-221 (QLKPMEINPE…VRFSAVALCK (220 aa)). The interval 5-10 (PMEINP) is interaction with ubiquitin. C90 functions as the Nucleophile in the catalytic mechanism. S125 is modified (phosphoserine). H161 serves as the catalytic Proton donor. Residues 211 to 216 (EVRFSA) are interaction with ubiquitin. A lipid anchor (S-farnesyl cysteine) is attached at C220. Positions 221-223 (KAA) are cleaved as a propeptide — removed in mature form.

Belongs to the peptidase C12 family. In terms of assembly, monomer. Homodimer. Interacts with SNCA. Interacts with COPS5. Post-translationally, O-glycosylated. In terms of tissue distribution, found in neuronal cell bodies and processes throughout the neocortex (at protein level). Expressed in neurons and cells of the diffuse neuroendocrine system and their tumors. Weakly expressed in ovary. Down-regulated in brains from Parkinson disease and Alzheimer disease patients.

The protein localises to the cytoplasm. It localises to the endoplasmic reticulum membrane. The enzyme catalyses Thiol-dependent hydrolysis of ester, thioester, amide, peptide and isopeptide bonds formed by the C-terminal Gly of ubiquitin (a 76-residue protein attached to proteins as an intracellular targeting signal).. Deubiquitinase that plays a role in the regulation of several processes such as maintenance of synaptic function, cardiac function, inflammatory response or osteoclastogenesis. Abrogates the ubiquitination of multiple proteins including WWTR1/TAZ, EGFR, HIF1A and beta-site amyloid precursor protein cleaving enzyme 1/BACE1. In addition, recognizes and hydrolyzes a peptide bond at the C-terminal glycine of ubiquitin to maintain a stable pool of monoubiquitin that is a key requirement for the ubiquitin-proteasome and the autophagy-lysosome pathways. Regulates amyloid precursor protein/APP processing by promoting BACE1 degradation resulting in decreased amyloid beta production. Plays a role in the immune response by regulating the ability of MHC I molecules to reach cross-presentation compartments competent for generating Ag-MHC I complexes. Mediates the 'Lys-48'-linked deubiquitination of the transcriptional coactivator WWTR1/TAZ leading to its stabilization and inhibition of osteoclastogenesis. Deubiquitinates and stabilizes epidermal growth factor receptor EGFR to prevent its degradation and to activate its downstream mediators. Modulates oxidative activity in skeletal muscle by regulating key mitochondrial oxidative proteins. Enhances the activity of hypoxia-inducible factor 1-alpha/HIF1A by abrogateing its VHL E3 ligase-mediated ubiquitination and consequently inhibiting its degradation. The polypeptide is Ubiquitin carboxyl-terminal hydrolase isozyme L1 (UCHL1) (Homo sapiens (Human)).